Here is a 457-residue protein sequence, read N- to C-terminus: Chromosomal replication initiator protein DnaA (457 aa).

Residues 1 to 73 (MANNYQTLYD…SKYLSEEFKK (73 aa)) are domain I, interacts with DnaA modulators. The interval 73–108 (KENIVNFEFIIDNEKLLINSNFLIKETNIKNRFNFS) is domain II. The domain III, AAA+ region stretch occupies residues 109–331 (DELLRYNFNN…GNLKQICFWA (223 aa)). 4 residues coordinate ATP: Gly156, Gly158, Lys159, and Thr160. The domain IV, binds dsDNA stretch occupies residues 332–457 (DNDTNKDLII…LQINLIINKF (126 aa)).

The protein belongs to the DnaA family. In terms of assembly, oligomerizes as a right-handed, spiral filament on DNA at oriC.

The protein localises to the cytoplasm. In terms of biological role, plays an essential role in the initiation and regulation of chromosomal replication. ATP-DnaA binds to the origin of replication (oriC) to initiate formation of the DNA replication initiation complex once per cell cycle. Binds the DnaA box (a 9 base pair repeat at the origin) and separates the double-stranded (ds)DNA. Forms a right-handed helical filament on oriC DNA; dsDNA binds to the exterior of the filament while single-stranded (ss)DNA is stabiized in the filament's interior. The ATP-DnaA-oriC complex binds and stabilizes one strand of the AT-rich DNA unwinding element (DUE), permitting loading of DNA polymerase. After initiation quickly degrades to an ADP-DnaA complex that is not apt for DNA replication. Binds acidic phospholipids. In Ureaplasma parvum serovar 3 (strain ATCC 700970), this protein is Chromosomal replication initiator protein DnaA.